Reading from the N-terminus, the 358-residue chain is MKNLLDFSLDELGELLKPKFRAKQIYEWIYHKNVDDFLQMKNLPLQMREDLANEFYIGGLNVSKCEQSVDGSKKYLFELKDGKTIESVLLPMKDEITDENGEILRHKRYTICVSSQVGCKIGCAFCLTAKGGFVRNLSAGEIVEQIRLIKKINKIPYERRINVVYMGMGEPLNNLENVAKAIKILIQNEGLAISPRRQTISTSGLSSQIKKLGEMNLGVLLAISLHAVNDELREKLMPINRAYNIASIMQAVREFPIDLRKRVMFEYLVMDGVNDSINDAKTLVRLLNGIKAKVNLIYFNPHIGSKFHRPSEENMIKFQDYLSVHGITCTIRQSKGLDISAACGQLREKNLKEKNDNA.

Residue Glu86 is the Proton acceptor of the active site. One can recognise a Radical SAM core domain in the interval 105–338; it reads RHKRYTICVS…CTIRQSKGLD (234 aa). Cys112 and Cys343 form a disulfide bridge. [4Fe-4S] cluster is bound by residues Cys119, Cys123, and Cys126. S-adenosyl-L-methionine is bound by residues 169-170, Ser201, 224-226, and Asn300; these read GE and SLH. Cys343 functions as the S-methylcysteine intermediate in the catalytic mechanism.

It belongs to the radical SAM superfamily. RlmN family. Requires [4Fe-4S] cluster as cofactor.

Its subcellular location is the cytoplasm. The enzyme catalyses adenosine(2503) in 23S rRNA + 2 reduced [2Fe-2S]-[ferredoxin] + 2 S-adenosyl-L-methionine = 2-methyladenosine(2503) in 23S rRNA + 5'-deoxyadenosine + L-methionine + 2 oxidized [2Fe-2S]-[ferredoxin] + S-adenosyl-L-homocysteine. It catalyses the reaction adenosine(37) in tRNA + 2 reduced [2Fe-2S]-[ferredoxin] + 2 S-adenosyl-L-methionine = 2-methyladenosine(37) in tRNA + 5'-deoxyadenosine + L-methionine + 2 oxidized [2Fe-2S]-[ferredoxin] + S-adenosyl-L-homocysteine. Functionally, specifically methylates position 2 of adenine 2503 in 23S rRNA and position 2 of adenine 37 in tRNAs. m2A2503 modification seems to play a crucial role in the proofreading step occurring at the peptidyl transferase center and thus would serve to optimize ribosomal fidelity. The sequence is that of Dual-specificity RNA methyltransferase RlmN from Campylobacter hominis (strain ATCC BAA-381 / DSM 21671 / CCUG 45161 / LMG 19568 / NCTC 13146 / CH001A).